The sequence spans 165 residues: Destrin (165 aa).

At Ala-2 the chain carries N-acetylalanine. In terms of domain architecture, ADF-H spans 4–153 (GVQVADEVCR…NRACIAEKLG (150 aa)). The short motif at 30–34 (KKRKK) is the Nuclear localization signal element.

Belongs to the actin-binding proteins ADF family.

Actin-depolymerizing protein. Severs actin filaments (F-actin) and binds to actin monomers (G-actin). Acts in a pH-independent manner. In Gallus gallus (Chicken), this protein is Destrin (DSTN).